We begin with the raw amino-acid sequence, 123 residues long: Insulin-like peptide-1 (123 aa).

Residues 1-24 form the signal peptide; that stretch reads MTTSSYFLLVALGLLLYVCQSSFG. Disulfide bonds link Cys-29-Cys-106, Cys-41-Cys-109, Cys-53-Cys-122, and Cys-108-Cys-113. Position 34 is a 4-hydroxyproline; partial (Pro-34). A propeptide spans 59-102 (c peptide); it reads EQGGANNARAYTGRTSSLMKRRGFLSLLKKRGKRDEGSLQRSGR. At Glu-107 the chain carries 4-carboxyglutamate. The residue at position 117 (Glu-117) is a 4-carboxyglutamate; partial.

It belongs to the insulin family. Heterodimer of A and B chains; disulfide-linked. As to expression, expressed by the venom duct.

The protein localises to the secreted. Functionally, this venom insulin facilitates prey capture by rapidly inducing hypoglycemic shock. Intraperitoneal injection of this peptide into zebrafish lowers blood glucose with the same potency than human insulin. In vivo, when applied to water, this peptide reduces overall locomotor activity of zebrafish larvae, observed as a significant decrease in the percentage of time spent swimming and movement frequency. The sequence is that of Insulin-like peptide-1 from Conus victoriae (Queen Victoria cone).